Reading from the N-terminus, the 99-residue chain is MALALSDVKRIAHLARIETSDAEAEQTLAQLNNFFSLVEQMQAVDTTGIEPLAHPLSAVRDIAQRLREDAVTESDRRADYQRPAPATENGLYLVPKVIE.

This sequence belongs to the GatC family. In terms of assembly, heterotrimer of A, B and C subunits.

The enzyme catalyses L-glutamyl-tRNA(Gln) + L-glutamine + ATP + H2O = L-glutaminyl-tRNA(Gln) + L-glutamate + ADP + phosphate + H(+). The catalysed reaction is L-aspartyl-tRNA(Asn) + L-glutamine + ATP + H2O = L-asparaginyl-tRNA(Asn) + L-glutamate + ADP + phosphate + 2 H(+). Functionally, allows the formation of correctly charged Asn-tRNA(Asn) or Gln-tRNA(Gln) through the transamidation of misacylated Asp-tRNA(Asn) or Glu-tRNA(Gln) in organisms which lack either or both of asparaginyl-tRNA or glutaminyl-tRNA synthetases. The reaction takes place in the presence of glutamine and ATP through an activated phospho-Asp-tRNA(Asn) or phospho-Glu-tRNA(Gln). The sequence is that of Aspartyl/glutamyl-tRNA(Asn/Gln) amidotransferase subunit C from Cupriavidus metallidurans (strain ATCC 43123 / DSM 2839 / NBRC 102507 / CH34) (Ralstonia metallidurans).